A 320-amino-acid chain; its full sequence is ATP-dependent 6-phosphofructokinase (320 aa).

Gly12 is a binding site for ATP. 22-26 is a binding site for ADP; sequence RSVIR. ATP is bound by residues 73–74 and 103–106; these read RF and GDGS. Asp104 provides a ligand contact to Mg(2+). 126–128 provides a ligand contact to substrate; that stretch reads TID. Asp128 acts as the Proton acceptor in catalysis. Residue Arg155 coordinates ADP. Substrate contacts are provided by residues Arg163 and 170-172; that span reads MGR. Residues 186–188 and 214–216 contribute to the ADP site; these read GAE and KRH. Residues Glu223, Arg244, and 250–253 contribute to the substrate site; that span reads HIQR.

This sequence belongs to the phosphofructokinase type A (PFKA) family. ATP-dependent PFK group I subfamily. Prokaryotic clade 'B1' sub-subfamily. Homotetramer. The cofactor is Mg(2+).

Its subcellular location is the cytoplasm. The enzyme catalyses beta-D-fructose 6-phosphate + ATP = beta-D-fructose 1,6-bisphosphate + ADP + H(+). It participates in carbohydrate degradation; glycolysis; D-glyceraldehyde 3-phosphate and glycerone phosphate from D-glucose: step 3/4. With respect to regulation, allosterically activated by ADP and other diphosphonucleosides, and allosterically inhibited by phosphoenolpyruvate. Catalyzes the phosphorylation of D-fructose 6-phosphate to fructose 1,6-bisphosphate by ATP, the first committing step of glycolysis. The chain is ATP-dependent 6-phosphofructokinase from Tolumonas auensis (strain DSM 9187 / NBRC 110442 / TA 4).